Consider the following 254-residue polypeptide: Leucyl/phenylalanyl-tRNA--protein transferase (254 aa).

It belongs to the L/F-transferase family.

The protein resides in the cytoplasm. The catalysed reaction is N-terminal L-lysyl-[protein] + L-leucyl-tRNA(Leu) = N-terminal L-leucyl-L-lysyl-[protein] + tRNA(Leu) + H(+). It catalyses the reaction N-terminal L-arginyl-[protein] + L-leucyl-tRNA(Leu) = N-terminal L-leucyl-L-arginyl-[protein] + tRNA(Leu) + H(+). The enzyme catalyses L-phenylalanyl-tRNA(Phe) + an N-terminal L-alpha-aminoacyl-[protein] = an N-terminal L-phenylalanyl-L-alpha-aminoacyl-[protein] + tRNA(Phe). Functions in the N-end rule pathway of protein degradation where it conjugates Leu, Phe and, less efficiently, Met from aminoacyl-tRNAs to the N-termini of proteins containing an N-terminal arginine or lysine. The chain is Leucyl/phenylalanyl-tRNA--protein transferase from Burkholderia vietnamiensis (strain G4 / LMG 22486) (Burkholderia cepacia (strain R1808)).